We begin with the raw amino-acid sequence, 201 residues long: 3-isopropylmalate dehydratase small subunit (201 aa).

Belongs to the LeuD family. LeuD type 1 subfamily. In terms of assembly, heterodimer of LeuC and LeuD.

The catalysed reaction is (2R,3S)-3-isopropylmalate = (2S)-2-isopropylmalate. Its pathway is amino-acid biosynthesis; L-leucine biosynthesis; L-leucine from 3-methyl-2-oxobutanoate: step 2/4. Catalyzes the isomerization between 2-isopropylmalate and 3-isopropylmalate, via the formation of 2-isopropylmaleate. This chain is 3-isopropylmalate dehydratase small subunit, found in Paramagnetospirillum magneticum (strain ATCC 700264 / AMB-1) (Magnetospirillum magneticum).